Reading from the N-terminus, the 299-residue chain is MLESHLIIHFLLAVIQFLLGTFTNGIIVVVNGIDLIKHRKMAPLDLLLSCLAVSRIFLQLFIFYVNVIVIFFIEFIMCSENCAILLFINELELWLATWLGVFYCAKVASVPHPLFIWLKMKISKLVPWMILGSLLYVSMTCVFHSKYAGFMVPYFLRNFFSQNATIQKEDTPAIQIFSFVAEFLVPLLIFLVAVLLLIFSLGRHTRQMRNTVAGSRVPGRGAPISALLSILSFVILYFSHCMIKVFLSSLKFHVRSFILPFFILVIGIYPSGHSLILILGNXKLKQNAKKFLLHSKCCQ.

The Extracellular portion of the chain corresponds to 1-9 (MLESHLIIH). A helical membrane pass occupies residues 10 to 30 (FLLAVIQFLLGTFTNGIIVVV). Residues 31–55 (NGIDLIKHRKMAPLDLLLSCLAVSR) lie on the Cytoplasmic side of the membrane. The helical transmembrane segment at 56 to 76 (IFLQLFIFYVNVIVIFFIEFI) threads the bilayer. Topologically, residues 77–81 (MCSEN) are extracellular. A helical membrane pass occupies residues 82–102 (CAILLFINELELWLATWLGVF). At 103–124 (YCAKVASVPHPLFIWLKMKISK) the chain is on the cytoplasmic side. Residues 125–145 (LVPWMILGSLLYVSMTCVFHS) traverse the membrane as a helical segment. Residues 146-178 (KYAGFMVPYFLRNFFSQNATIQKEDTPAIQIFS) are Extracellular-facing. Asn-163 carries an N-linked (GlcNAc...) asparagine glycan. The helical transmembrane segment at 179–199 (FVAEFLVPLLIFLVAVLLLIF) threads the bilayer. The Cytoplasmic portion of the chain corresponds to 200-222 (SLGRHTRQMRNTVAGSRVPGRGA). Residues 223-243 (PISALLSILSFVILYFSHCMI) traverse the membrane as a helical segment. The Extracellular segment spans residues 244–257 (KVFLSSLKFHVRSF). A helical transmembrane segment spans residues 258–278 (ILPFFILVIGIYPSGHSLILI). Over 279 to 299 (LGNXKLKQNAKKFLLHSKCCQ) the chain is Cytoplasmic.

It belongs to the G-protein coupled receptor T2R family.

It is found in the membrane. Functionally, receptor that may play a role in the perception of bitterness and is gustducin-linked. May play a role in sensing the chemical composition of the gastrointestinal content. The activity of this receptor may stimulate alpha gustducin, mediate PLC-beta-2 activation and lead to the gating of TRPM5. The sequence is that of Taste receptor type 2 member 1 (TAS2R1) from Pongo pygmaeus (Bornean orangutan).